Reading from the N-terminus, the 576-residue chain is 2-succinyl-5-enolpyruvyl-6-hydroxy-3-cyclohexene-1-carboxylate synthase (576 aa).

Belongs to the TPP enzyme family. MenD subfamily. In terms of assembly, homodimer. Requires Mg(2+) as cofactor. It depends on Mn(2+) as a cofactor. Thiamine diphosphate serves as cofactor.

It carries out the reaction isochorismate + 2-oxoglutarate + H(+) = 5-enolpyruvoyl-6-hydroxy-2-succinyl-cyclohex-3-ene-1-carboxylate + CO2. The protein operates within quinol/quinone metabolism; 1,4-dihydroxy-2-naphthoate biosynthesis; 1,4-dihydroxy-2-naphthoate from chorismate: step 2/7. It functions in the pathway quinol/quinone metabolism; menaquinone biosynthesis. Catalyzes the thiamine diphosphate-dependent decarboxylation of 2-oxoglutarate and the subsequent addition of the resulting succinic semialdehyde-thiamine pyrophosphate anion to isochorismate to yield 2-succinyl-5-enolpyruvyl-6-hydroxy-3-cyclohexene-1-carboxylate (SEPHCHC). This is 2-succinyl-5-enolpyruvyl-6-hydroxy-3-cyclohexene-1-carboxylate synthase from Photobacterium profundum (strain SS9).